The following is a 1366-amino-acid chain: Collagen alpha-2(I) chain (1366 aa).

The N-terminal stretch at 1 to 22 (MLSFVDTRTLLLLAVTSCLATC) is a signal peptide. At Gln23 the chain carries Pyrrolidone carboxylic acid. The propeptide at 23–79 (QSLQEATARKGPTGDRGPRGERGPPGPPGRDGDDGIPGPPGPPGPPGPPGLGGNFAA) is N-terminal propeptide. Residues 27-1131 (EATARKGPTG…PRSPPSLRPK (1105 aa)) form a disordered region. The span at 34–44 (PTGDRGPRGER) shows a compositional bias: basic and acidic residues. Pro residues predominate over residues 59–71 (PGPPGPPGPPGPP). At Lys84 the chain carries Allysine. A compositionally biased stretch (gly residues) spans 84-94 (KGVGLGPGPMG). Residues 95-132 (LMGPRGPPGASGAPGPQGFQGPAGEPGEPGQTGPAGAR) show a composition bias toward low complexity. The span at 141–155 (AGEDGHPGKPGRPGE) shows a compositional bias: basic and acidic residues. Lys177 carries the 5-hydroxylysine; alternate modification. An O-linked (Gal...) hydroxylysine; alternate glycan is attached at Lys177. 8 stretches are compositionally biased toward low complexity: residues 225–254 (VGAP…SAGP), 279–293 (AGPR…VSGP), 300–321 (PGAN…AGAP), 330–345 (PGPV…RGIV), 384–408 (NGEA…RGLP), 423–434 (RGATGPAGVRGP), 470–489 (LPGI…RGEP), and 513–531 (AGLA…NGAQ). Residues 538 to 547 (GVQGGKGEQG) show a composition bias toward gly residues. Over residues 594 to 611 (PGESGAAGPSGPIGSRGP) the composition is skewed to low complexity. Residues 634 to 643 (GASGPGGLPG) show a composition bias toward gly residues. Low complexity-rich tracts occupy residues 668 to 690 (NPGR…AGAT) and 717 to 737 (VGPA…QPGA). Over residues 738–747 (KGERGTKGPK) the composition is skewed to basic and acidic residues. Positions 756 to 765 (TGPIGSAGPS) are enriched in low complexity. Over residues 775 to 784 (GSRGDGGPPG) the composition is skewed to gly residues. 5 stretches are compositionally biased toward low complexity: residues 785–795 (ATGFPGAAGRT), 863–876 (PQGL…LGLP), 893–932 (EPGP…NPGN), 951–974 (PGNI…PTGK), and 981–1001 (PGPA…PSGP). Residues 1005–1016 (RGDKGEPGEKGP) are compositionally biased toward basic and acidic residues. The span at 1089 to 1103 (AGPPGPPGPPGPPGP) shows a compositional bias: pro residues. The propeptide at 1120 to 1366 (DQPRSPPSLR…RVDVGPVCFK (247 aa)) is C-terminal propeptide. In terms of domain architecture, Fibrillar collagen NC1 spans 1133-1366 (YEVDATLKSL…RVDVGPVCFK (234 aa)). 3 disulfides stabilise this stretch: Cys1163/Cys1195, Cys1203/Cys1364, and Cys1272/Cys1317. 5 residues coordinate Ca(2+): Asp1181, Asn1183, Gln1184, Cys1186, and Asp1189.

The protein belongs to the fibrillar collagen family. Trimers of one alpha 2(I) and two alpha 1(I) chains. Interacts (via C-terminus) with TMEM131 (via PapD-L domain); the interaction is direct and is involved in assembly and TRAPPIII ER-to-Golgi transport complex-dependent secretion of collagen. In terms of processing, prolines at the third position of the tripeptide repeating unit (G-X-Y) are hydroxylated in some or all of the chains. Forms the fibrils of tendon, ligaments and bones. In bones the fibrils are mineralized with calcium hydroxyapatite.

It is found in the secreted. Its subcellular location is the extracellular space. The protein resides in the extracellular matrix. In terms of biological role, type I collagen is a member of group I collagen (fibrillar forming collagen). This is Collagen alpha-2(I) chain (COL1A2) from Canis lupus familiaris (Dog).